The following is a 378-amino-acid chain: Odorant receptor 33a (378 aa).

Residues 1–33 (MDSRRKVRSENLYKTYWLYWRLLGVEGDYPFRR) lie on the Cytoplasmic side of the membrane. The chain crosses the membrane as a helical span at residues 34 to 54 (LVDFTITSFITILFPVHLILG). Topologically, residues 55–62 (MYKKPQIQ) are extracellular. Residues 63–83 (VFRSLHFTSECLFCSYKFFCF) traverse the membrane as a helical segment. Over 84-127 (RWKLKEIKTIEGLLQDLDSRVESEEERNYFNQNPSRVARMLSKS) the chain is Cytoplasmic. Residues 128–148 (YLVAAISAIITATVAGLFSTG) form a helical membrane-spanning segment. The Extracellular segment spans residues 149–163 (RNLMYLGWFPYDFQA). A helical membrane pass occupies residues 164 to 184 (TAAIYWISFSYQAIGSSLLIL). The Cytoplasmic segment spans residues 185-254 (ENLANDSYPP…LLRSTLHLSQ (70 aa)). A helical membrane pass occupies residues 255–275 (LGQFLSSGINISITLINILFF). Residues 276–285 (AENNFAMLYY) lie on the Extracellular side of the membrane. A helical membrane pass occupies residues 286-306 (AVFFAAMLIELFPSCYYGILM). Residues 307–355 (TMEFDKLPYAIFSSNWLKMDKRYNRSLIILMQLTLVPVNIKAGGIVGID) lie on the Cytoplasmic side of the membrane. The helical transmembrane segment at 356 to 376 (MSAFFATVRMAYSFYTLALSF) threads the bilayer. The Extracellular segment spans residues 377 to 378 (RV).

It belongs to the insect chemoreceptor superfamily. Heteromeric odorant receptor channel (TC 1.A.69) family. Or2a subfamily. Interacts with Orco. Complexes exist early in the endomembrane system in olfactory sensory neurons (OSNs), coupling these complexes to the conserved ciliary trafficking pathway. Expressed in 1-2 cells on the distal edge of the antenna but not the maxillary palp.

It is found in the cell membrane. In terms of biological role, odorant receptor which mediates acceptance or avoidance behavior, depending on its substrates. The odorant receptor repertoire encodes a large collection of odor stimuli that vary widely in identity, intensity, and duration. May form a complex with Orco to form odorant-sensing units, providing sensitive and prolonged odorant signaling and calcium permeability. In Drosophila melanogaster (Fruit fly), this protein is Odorant receptor 33a (Or33a).